A 119-amino-acid chain; its full sequence is Ribonuclease P protein component (119 aa).

Positions 1–24 (MRGSSRFRPHEKLRASDDYQRVKR) are disordered. Over residues 8-21 (RPHEKLRASDDYQR) the composition is skewed to basic and acidic residues.

It belongs to the RnpA family. In terms of assembly, consists of a catalytic RNA component (M1 or rnpB) and a protein subunit.

The catalysed reaction is Endonucleolytic cleavage of RNA, removing 5'-extranucleotides from tRNA precursor.. In terms of biological role, RNaseP catalyzes the removal of the 5'-leader sequence from pre-tRNA to produce the mature 5'-terminus. It can also cleave other RNA substrates such as 4.5S RNA. The protein component plays an auxiliary but essential role in vivo by binding to the 5'-leader sequence and broadening the substrate specificity of the ribozyme. This chain is Ribonuclease P protein component, found in Syntrophobacter fumaroxidans (strain DSM 10017 / MPOB).